A 292-amino-acid polypeptide reads, in one-letter code: uncharacterized protein (292 aa).

Residues 66 to 86 form a helical membrane-spanning segment; it reads LFFYLLFWWTYLTIVVLLTVP.

Its subcellular location is the host membrane. This is an uncharacterized protein from Alcelaphine herpesvirus 1 (strain C500) (AlHV-1).